The following is a 1029-amino-acid chain: Exportin-T (1029 aa).

It belongs to the exportin family.

The protein localises to the nucleus. It localises to the cytoplasm. TRNA nucleus export receptor which facilitates tRNA translocation across the nuclear pore complex. Involved in pre-tRNA splicing, probably by affecting the interaction of pre-tRNA with splicing endonuclease. The chain is Exportin-T (los1) from Aspergillus clavatus (strain ATCC 1007 / CBS 513.65 / DSM 816 / NCTC 3887 / NRRL 1 / QM 1276 / 107).